Consider the following 184-residue polypeptide: Large ribosomal subunit protein uL5c (184 aa).

The protein belongs to the universal ribosomal protein uL5 family. As to quaternary structure, part of the 50S ribosomal subunit; contacts the 5S rRNA.

Its subcellular location is the plastid. It localises to the chloroplast. Its function is as follows. Binds 5S rRNA, forms part of the central protuberance of the 50S subunit. This Ostreococcus tauri protein is Large ribosomal subunit protein uL5c (rpl5).